A 495-amino-acid chain; its full sequence is Geraniol 8-hydroxylase (495 aa).

Residues 5 to 25 (FLTIAIGFLFTITLYQALNFF) traverse the membrane as a helical segment. Cys-438 contacts heme.

This sequence belongs to the cytochrome P450 family. It depends on heme as a cofactor. Expressed in leaves, stems and roots.

It is found in the endoplasmic reticulum membrane. It carries out the reaction (2E)-geraniol + reduced [NADPH--hemoprotein reductase] + O2 = (6E)-8-hydroxygeraniol + oxidized [NADPH--hemoprotein reductase] + H2O + H(+). Functionally, hydroxylase involved in the biosynthesis of hydroxygeraniol, a precursor of the iridoid monoterpenoid swertiamarin. The polypeptide is Geraniol 8-hydroxylase (CYP76B10) (Swertia mussotii (Felwort)).